The sequence spans 209 residues: Imidazoleglycerol-phosphate dehydratase (209 aa).

This sequence belongs to the imidazoleglycerol-phosphate dehydratase family.

It is found in the cytoplasm. The enzyme catalyses D-erythro-1-(imidazol-4-yl)glycerol 3-phosphate = 3-(imidazol-4-yl)-2-oxopropyl phosphate + H2O. It functions in the pathway amino-acid biosynthesis; L-histidine biosynthesis; L-histidine from 5-phospho-alpha-D-ribose 1-diphosphate: step 6/9. This chain is Imidazoleglycerol-phosphate dehydratase, found in Prochlorococcus marinus (strain MIT 9313).